We begin with the raw amino-acid sequence, 436 residues long: 3-hydroxy-3-methylglutaryl-coenzyme A reductase (436 aa).

Catalysis depends on charge relay system residues E99, K277, and D293. H390 acts as the Proton donor in catalysis.

Belongs to the HMG-CoA reductase family.

It carries out the reaction (R)-mevalonate + 2 NADP(+) + CoA = (3S)-3-hydroxy-3-methylglutaryl-CoA + 2 NADPH + 2 H(+). It functions in the pathway metabolic intermediate biosynthesis; (R)-mevalonate biosynthesis; (R)-mevalonate from acetyl-CoA: step 3/3. In terms of biological role, converts HMG-CoA to mevalonate. This is 3-hydroxy-3-methylglutaryl-coenzyme A reductase (hmgA) from Archaeoglobus fulgidus (strain ATCC 49558 / DSM 4304 / JCM 9628 / NBRC 100126 / VC-16).